The following is a 323-amino-acid chain: Cysteine synthase A (323 aa).

Hydrogen sulfide is bound by residues asparagine 8 and arginine 35. Lysine 42 carries the post-translational modification N6-(pyridoxal phosphate)lysine. Pyridoxal 5'-phosphate is bound by residues asparagine 72 and 177-181; that span reads GTGGT. Residue leucine 269 participates in hydrogen sulfide binding. Serine 273 lines the pyridoxal 5'-phosphate pocket.

The protein belongs to the cysteine synthase/cystathionine beta-synthase family. As to quaternary structure, homodimer. It depends on pyridoxal 5'-phosphate as a cofactor.

The enzyme catalyses O-acetyl-L-serine + hydrogen sulfide = L-cysteine + acetate. The protein operates within amino-acid biosynthesis; L-cysteine biosynthesis; L-cysteine from L-serine: step 2/2. Two cysteine synthase enzymes are found. Both catalyze the same reaction. Cysteine synthase B can also use thiosulfate in place of sulfide to give cysteine thiosulfonate as a product. This is Cysteine synthase A (cysK) from Salmonella typhi.